The primary structure comprises 737 residues: Catalase-peroxidase (737 aa).

A signal peptide spans 1-23; sequence MLKKILPVLITLAIVHNTPTAWA. Residues 102–223 constitute a cross-link (tryptophyl-tyrosyl-methioninium (Trp-Tyr) (with M-249)); sequence WHGAGTYRIY…LAATQMGLIY (122 aa). Histidine 103 acts as the Proton acceptor in catalysis. Positions 223–249 form a cross-link, tryptophyl-tyrosyl-methioninium (Tyr-Met) (with W-102); sequence YVNPEGPNGKPDPVAAAKDIREAFARM. Histidine 264 contributes to the heme b binding site.

This sequence belongs to the peroxidase family. Peroxidase/catalase subfamily. Homodimer or homotetramer. Requires heme b as cofactor. Post-translationally, formation of the three residue Trp-Tyr-Met cross-link is important for the catalase, but not the peroxidase activity of the enzyme.

The catalysed reaction is H2O2 + AH2 = A + 2 H2O. The enzyme catalyses 2 H2O2 = O2 + 2 H2O. Bifunctional enzyme with both catalase and broad-spectrum peroxidase activity. This Yersinia pseudotuberculosis serotype O:3 (strain YPIII) protein is Catalase-peroxidase.